The following is a 77-amino-acid chain: Acyl carrier protein (77 aa).

The Carrier domain occupies 2–77 (SNIEERVKKI…AAIDYVSKNQ (76 aa)). An O-(pantetheine 4'-phosphoryl)serine modification is found at S37.

Belongs to the acyl carrier protein (ACP) family. 4'-phosphopantetheine is transferred from CoA to a specific serine of apo-ACP by AcpS. This modification is essential for activity because fatty acids are bound in thioester linkage to the sulfhydryl of the prosthetic group.

Its subcellular location is the cytoplasm. It functions in the pathway lipid metabolism; fatty acid biosynthesis. In terms of biological role, carrier of the growing fatty acid chain in fatty acid biosynthesis. The polypeptide is Acyl carrier protein (Shewanella oneidensis (strain ATCC 700550 / JCM 31522 / CIP 106686 / LMG 19005 / NCIMB 14063 / MR-1)).